The chain runs to 500 residues: Autophagy-related protein 18 (500 aa).

One copy of the WD 1 repeat lies at 3–41; the sequence is DSSPTINFINFNQTGTCISLGTSKGFKIFNCEPFGKFYS. Residues 174–197 form a disordered region; that stretch reads VGGNTETSFKRDQQDAGHSDISDL. A compositionally biased stretch (basic and acidic residues) spans 181-194; sequence SFKRDQQDAGHSDI. WD repeat units follow at residues 243–283 and 288–327; these read AHKG…KIYQ and TYATRIYSISFSEDSQYLAVTGSSKTVHIFKLGHSMSNNK. The L/FRRG motif motif lies at 284–288; that stretch reads FRRGT. Residues 328-358 are disordered; that stretch reads LDSDDSNMEEAAADDSSLDTTSIDALSDEEN. The span at 331 to 344 shows a compositional bias: acidic residues; the sequence is DDSNMEEAAADDSS. Position 354 is a phosphoserine (Ser354).

Belongs to the WD repeat PROPPIN family. Component of the PI(3,5)P2 regulatory complex, composed of ATG18, FIG4, FAB1, VAC14 and VAC7. VAC14 nucleates the assembly of the complex and serves as a scaffold. Interacts with ATG2, ATG9 and VAC17. The ATG2-ATG18 complex is essential for autophagosome formation.

It is found in the preautophagosomal structure membrane. It localises to the vacuole membrane. Its subcellular location is the endosome membrane. The PI(3,5)P2 regulatory complex regulates both the synthesis and turnover of phosphatidylinositol 3,5-bisphosphate (PtdIns(3,5)P2). May negatively regulate FAB1 activity by sequestering or masking VAC7 from FAB1. Necessary for proper vacuole morphology. Plays an important role in osmotically-induced vacuole fragmentation. Required for cytoplasm to vacuole transport (Cvt) vesicle formation, pexophagy and starvation-induced autophagy. Involved in correct ATG9 trafficking to the pre-autophagosomal structure. Might also be involved in premeiotic DNA replication. With ATG2, protects ATG8 from ARG4-mediated cleavage. The chain is Autophagy-related protein 18 (ATG18) from Saccharomyces cerevisiae (strain YJM789) (Baker's yeast).